We begin with the raw amino-acid sequence, 474 residues long: tRNA (guanine(37)-N(1))-methyltransferase (474 aa).

Residues His234, 274-275, 303-304, and Asn345 each bind S-adenosyl-L-methionine; these read DL and DA. Residues 452–464 show a composition bias toward acidic residues; it reads EPEAQCESEEAEE. The tract at residues 452–474 is disordered; the sequence is EPEAQCESEEAEEPSSKRIKVDT. Residues 465 to 474 show a composition bias toward basic and acidic residues; it reads PSSKRIKVDT.

Belongs to the class I-like SAM-binding methyltransferase superfamily. TRM5/TYW2 family. Monomer.

The protein resides in the mitochondrion matrix. Its subcellular location is the nucleus. It is found in the cytoplasm. The catalysed reaction is guanosine(37) in tRNA + S-adenosyl-L-methionine = N(1)-methylguanosine(37) in tRNA + S-adenosyl-L-homocysteine + H(+). In terms of biological role, specifically methylates the N1 position of guanosine-37 in various cytoplasmic and mitochondrial tRNAs. Methylation is not dependent on the nature of the nucleoside 5' of the target nucleoside. This is the first step in the biosynthesis of wybutosine (yW), a modified base adjacent to the anticodon of tRNAs and required for accurate decoding. The sequence is that of tRNA (guanine(37)-N(1))-methyltransferase from Caenorhabditis elegans.